Here is a 1026-residue protein sequence, read N- to C-terminus: MQSLRFRQIDPGMTLREIDSEILKYWKDKNILEKILSKGGSKKFVFLEGPPTANGRPHIGHAMTRTIKDIVLRYNTMTDHKIYRRVGGWDCHGLPVELEAEKHFGFHTKSEIVNFGVEKFNQYCRESIFRYIDEWKQVDDLIGFSIDHNGDYITLRNDYMESEWFALKTMYNSGLLYKDYTVVPYCPRCETSLSSHEVAQGYKDVKDPSVYVRFKSADEENTYFVAWTTTPWTLPSNEFLVVNPDMEYSLVEAQGSRYYVASSRAGYIFKEYREIRRMHGRDLVGKRYLQLMPFLDPPSGSLKVVAGSFVTSEDGSGIVHAAPAFGADDYQIGKEEGVEILNPVDKNGRFADPRIPWNGKFVRDANEDIIVYLKKNQMLLKSEKYEHSYPFCYRCDTPLLYYPLDAWFIAVSRIRDKLVEYNERINWKPDYLKHGRFGNFLGEAKDWNLSRDRFWGTPLPAWRCKNGHLVFVGSRKEIEDLGGKVPEDLHRPYIDEVRFKCPTCGEEMSREPYVIDTWFDSGSATYAASHYPFEKNFDPETDVPVSFITEAIDQTRGWFYVLHVIATIMFNKNAYESALSINFILDAQGRKMSKSKGNSVYALDFLNEVPPDSLRLFFLYGAPWKSKNLDKKVIDEVSRKTLMTVLNVYSFFAYNANIDNFQWNGLQLSGNALDRYMVSKVNSFVRSSRDAYESLDFHEVVRASMEFVDDLSNFYLRLSRRRFWAEGFDDDKLSAYSTLYYALKAFSEVMAPITPFFSDFIYLNLGGDKESVHLEAFPEFDSTLMDEKLESEMDRAYSVIETVRRLRQENSIKGRQPLREILIAGDMEESIIDVVKSELNAKDIKLIERDQEPIRLSADLRMDRAAPVLRSRVNAVRHKIRSMDGLEVQRQISEKGFVEIDGVRLDPDMVEISRVPDPNYAYSQTEKYGIDVFINKNIDRDGYLEGLARELVRRIQVMRKEMNLNYTDRIITHLDLSDDFLEALNKHAEYIKNETQSDSIITDKVEGMKLWEINGEPVRIKIDLAR.

A 'HIGH' region motif is present at residues 51–61 (PTANGRPHIGH). The 'KMSKS' region signature appears at 591–595 (KMSKS). K594 lines the ATP pocket.

This sequence belongs to the class-I aminoacyl-tRNA synthetase family. IleS type 2 subfamily. Monomer. Zn(2+) serves as cofactor.

The protein localises to the cytoplasm. It carries out the reaction tRNA(Ile) + L-isoleucine + ATP = L-isoleucyl-tRNA(Ile) + AMP + diphosphate. Its function is as follows. Catalyzes the attachment of isoleucine to tRNA(Ile). As IleRS can inadvertently accommodate and process structurally similar amino acids such as valine, to avoid such errors it has two additional distinct tRNA(Ile)-dependent editing activities. One activity is designated as 'pretransfer' editing and involves the hydrolysis of activated Val-AMP. The other activity is designated 'posttransfer' editing and involves deacylation of mischarged Val-tRNA(Ile). This chain is Isoleucine--tRNA ligase, found in Thermoplasma acidophilum (strain ATCC 25905 / DSM 1728 / JCM 9062 / NBRC 15155 / AMRC-C165).